The sequence spans 683 residues: Methionine--tRNA ligase (683 aa).

The 'HIGH' region motif lies at 15–25 (PYANGSIHLGH). Residues cysteine 146, cysteine 149, cysteine 159, and cysteine 162 each contribute to the Zn(2+) site. The short motif at 332–336 (KMSKS) is the 'KMSKS' region element. Lysine 335 contributes to the ATP binding site. The region spanning 582-683 (DFAKVDLRIA…QGAQAGMRVM (102 aa)) is the tRNA-binding domain.

This sequence belongs to the class-I aminoacyl-tRNA synthetase family. MetG type 1 subfamily. Homodimer. Zn(2+) serves as cofactor.

It localises to the cytoplasm. It carries out the reaction tRNA(Met) + L-methionine + ATP = L-methionyl-tRNA(Met) + AMP + diphosphate. In terms of biological role, is required not only for elongation of protein synthesis but also for the initiation of all mRNA translation through initiator tRNA(fMet) aminoacylation. The polypeptide is Methionine--tRNA ligase (Vibrio cholerae serotype O1 (strain ATCC 39315 / El Tor Inaba N16961)).